The chain runs to 11197 residues: Nonribosomal peptide synthetase 5 (11197 aa).

Residues 19–413 (AQRARKQPDA…DGTLQVVGHK (395 aa)) are adenylation (A) domain 1. The tract at residues 426 to 452 (HASSSASSVGETPGVTGPISTPMGDSV) is disordered. The interval 690–897 (KQLRQFCQEQ…LMDESMKQQI (208 aa)) is condensation (C) domain 1. Positions 918–1310 (DAAQDYPDAP…GRHDGQLKVR (393 aa)) are adenylation (A) domain 2. One can recognise a Carrier 1 domain in the interval 1446–1522 (ADRSPVHMML…DMANNIAISE (77 aa)). Ser1483 carries the post-translational modification O-(pantetheine 4'-phosphoryl)serine. The tract at residues 1952 to 2380 (VEDVYPCSPV…SDISLMDPLS (429 aa)) is condensation (C) domain 2. Residues 2406–2805 (VARIEPDKMA…QRKDTQIKIR (400 aa)) form an adenylation (A) domain 3 region. Residues 2945–3021 (DSLTSTEVTI…SLAAFVDYDS (77 aa)) enclose the Carrier 2 domain. Ser2982 is subject to O-(pantetheine 4'-phosphoryl)serine. Residues 3041–3481 (EESFALSPIQ…TSTMKSEFTL (441 aa)) form an epimerase (E) domain 1 region. The tract at residues 3515 to 3957 (EEIFPCSPMQ…VSPETRCELD (443 aa)) is condensation (C) domain 3. Residues 3976–4371 (FEQQVEKIPD…RRRDNQVKVR (396 aa)) form an adenylation (A) domain 4 region. Positions 4508–4584 (RKLTPMEQQL…ELANHARFKA (77 aa)) constitute a Carrier 3 domain. Ser4545 bears the O-(pantetheine 4'-phosphoryl)serine mark. An epimerase (E) domain 2 region spans residues 4603–5022 (FPLLPIQRMF…LNEYTAALRS (420 aa)). A condensation (C) domain 4 region spans residues 5069–5501 (ESIYPCSPLQ…LVGDSERQGL (433 aa)). The adenylation (A) domain 5 stretch occupies residues 5521 to 5918 (EAQVKAIPDN…RRKDTQVKVR (398 aa)). In terms of domain architecture, Carrier 4 spans 6068–6141 (SEAEDIIRAV…ALAQFVSQST (74 aa)). O-(pantetheine 4'-phosphoryl)serine is present on Ser6102. Residues 6162–6512 (FSLSPIQQMF…MEILFNYFGQ (351 aa)) are epimerase (E) domain 3. The tract at residues 6636–7076 (EEIFPCSPIQ…LVGAETRREM (441 aa)) is condensation (C) domain 5. Positions 7097–7491 (ERNSQAMPDR…RRRDNQVKVR (395 aa)) are adenylation (A) domain 6. The Carrier 5 domain occupies 7636–7712 (KPKTKMEEHF…DLAGRSRFKN (77 aa)). The residue at position 7673 (Ser7673) is an O-(pantetheine 4'-phosphoryl)serine. The interval 7733-8162 (ALLPIQRLFF…KYMLETLASQ (430 aa)) is epimerase (E) domain 4. The condensation (C) domain 6 stretch occupies residues 8205 to 8638 (EASYPCSPLQ…MLGDSGRKRI (434 aa)). The interval 8660 to 8832 (EAHVKESPNR…DHRATATEIV (173 aa)) is adenylation (A) domain 7. The Carrier 6 domain occupies 9173–9248 (SAQTAVVQII…AMAAKAQQIG (76 aa)). The residue at position 9209 (Ser9209) is an O-(pantetheine 4'-phosphoryl)serine. The interval 9565 to 9683 (RVKDMRRAIP…LHEVVSALQK (119 aa)) is epimerase (E) domain 5. Residues 9721–10116 (VEDVYPTSPM…LVPAKHMEQL (396 aa)) are condensation (C) domain 7. Positions 10136–10529 (DDMVRSTPTA…VGRKDTQIKI (394 aa)) are adenylation (A) domain 8. The Carrier 7 domain occupies 10663–10749 (LDSSDYVAMQ…TLAVTIKADM (87 aa)). Ser10708 bears the O-(pantetheine 4'-phosphoryl)serine mark. A thioesterase (TE) domain region spans residues 10806-11104 (NFLVTGSTGF…SLRPMSGPEW (299 aa)).

It belongs to the NRP synthetase family.

It participates in secondary metabolite biosynthesis. Functionally, nonribosomal peptide synthetase; part of the Fg3_54/C64 gene cluster that mediates the biosynthesis of the octapeptide fusaoctaxin A, a virulence factor that is required for cell-to-cell invasiveness of plant host. The 2 nonribosomal peptide synthetases NRPS9 and NRPS5 form an assembly line which likely utilizes GABA as a starter unit (loaded on the unique module M1 of NRPS9) and sequentially incorporates seven extender units composed of the residues L-Ala, L-allo-Ile, L-Ser, L-Val, L-Ser, L-Leu and L-Leu, respectively. During the process, each of the residues that are tethered on modules M3-M7 of NRPS5 containing an E domain can undergo an epimerization reaction to produce a D-configuration before the transpeptidation reaction occurs. The elongation of the peptidyl chain might be terminated by module M8-mediated L-Leu incorporation, followed by R domain-catalyzed 4 electron reduction to release the resulting octapeptide from the assembly line as an alcohol. Fusaoctaxin A is cleaved by the cluster specific ABC transporter FGM5 to the pentapeptide fusapentaxin A and the tripeptide fusatrixin A. The other enzymes from the cluster, FGM1, FGM2, FGM3 and FGM9 seem not to be involved in the biosynthesis of fusaoctaxin A and their functions have still to be determined. The polypeptide is Nonribosomal peptide synthetase 5 (Gibberella zeae (strain ATCC MYA-4620 / CBS 123657 / FGSC 9075 / NRRL 31084 / PH-1) (Wheat head blight fungus)).